A 490-amino-acid chain; its full sequence is Betaine aldehyde dehydrogenase (490 aa).

K(+)-binding residues include Ile27 and Asp93. 150–152 (GAW) is an NAD(+) binding site. Residue Lys162 is the Charge relay system of the active site. Position 176–179 (176–179 (KPSE)) interacts with NAD(+). Val180 provides a ligand contact to K(+). 230-233 (GTTT) is an NAD(+) binding site. Leu246 contacts K(+). Catalysis depends on Glu252, which acts as the Proton acceptor. 3 residues coordinate NAD(+): Gly254, Cys286, and Glu387. Cys286 functions as the Nucleophile in the catalytic mechanism. Cys286 carries the cysteine sulfenic acid (-SOH) modification. K(+) is bound by residues Lys457 and Gly460. Glu464 acts as the Charge relay system in catalysis.

It belongs to the aldehyde dehydrogenase family. As to quaternary structure, dimer of dimers. K(+) serves as cofactor.

It catalyses the reaction betaine aldehyde + NAD(+) + H2O = glycine betaine + NADH + 2 H(+). It functions in the pathway amine and polyamine biosynthesis; betaine biosynthesis via choline pathway; betaine from betaine aldehyde: step 1/1. Functionally, involved in the biosynthesis of the osmoprotectant glycine betaine. Catalyzes the irreversible oxidation of betaine aldehyde to the corresponding acid. The chain is Betaine aldehyde dehydrogenase from Pseudomonas putida (strain W619).